A 258-amino-acid polypeptide reads, in one-letter code: Phosphate import ATP-binding protein PstB 1 (258 aa).

The ABC transporter domain occupies 5–247 (LDLTDVNIYY…EKIFSNPNQK (243 aa)). 37–44 (GPSGCGKT) provides a ligand contact to ATP.

The protein belongs to the ABC transporter superfamily. Phosphate importer (TC 3.A.1.7) family. As to quaternary structure, the complex is composed of two ATP-binding proteins (PstB), two transmembrane proteins (PstC and PstA) and a solute-binding protein (PstS).

The protein resides in the cell membrane. It carries out the reaction phosphate(out) + ATP + H2O = ADP + 2 phosphate(in) + H(+). In terms of biological role, part of the ABC transporter complex PstSACB involved in phosphate import. Responsible for energy coupling to the transport system. This is Phosphate import ATP-binding protein PstB 1 from Mycobacterium tuberculosis (strain CDC 1551 / Oshkosh).